The following is a 119-amino-acid chain: Protein TusC (119 aa).

This sequence belongs to the DsrF/TusC family. Heterohexamer, formed by a dimer of trimers. The hexameric TusBCD complex contains 2 copies each of TusB, TusC and TusD. The TusBCD complex interacts with TusE.

The protein resides in the cytoplasm. Its function is as follows. Part of a sulfur-relay system required for 2-thiolation of 5-methylaminomethyl-2-thiouridine (mnm(5)s(2)U) at tRNA wobble positions. The protein is Protein TusC of Shigella sonnei (strain Ss046).